We begin with the raw amino-acid sequence, 366 residues long: Holliday junction branch migration complex subunit RuvB (366 aa).

Positions methionine 1–isoleucine 49 are disordered. Residues proline 13 to tyrosine 210 are large ATPase domain (RuvB-L). Residues isoleucine 49, arginine 50, glycine 91, lysine 94, threonine 95, threonine 96, glutamate 157–tyrosine 159, arginine 200, tyrosine 210, and arginine 247 each bind ATP. Mg(2+) is bound at residue threonine 95. The small ATPAse domain (RuvB-S) stretch occupies residues glutamate 211–glutamine 281. Positions proline 284–leucine 366 are head domain (RuvB-H). Positions 339 and 344 each coordinate DNA.

The protein belongs to the RuvB family. Homohexamer. Forms an RuvA(8)-RuvB(12)-Holliday junction (HJ) complex. HJ DNA is sandwiched between 2 RuvA tetramers; dsDNA enters through RuvA and exits via RuvB. An RuvB hexamer assembles on each DNA strand where it exits the tetramer. Each RuvB hexamer is contacted by two RuvA subunits (via domain III) on 2 adjacent RuvB subunits; this complex drives branch migration. In the full resolvosome a probable DNA-RuvA(4)-RuvB(12)-RuvC(2) complex forms which resolves the HJ.

It localises to the cytoplasm. The catalysed reaction is ATP + H2O = ADP + phosphate + H(+). The RuvA-RuvB-RuvC complex processes Holliday junction (HJ) DNA during genetic recombination and DNA repair, while the RuvA-RuvB complex plays an important role in the rescue of blocked DNA replication forks via replication fork reversal (RFR). RuvA specifically binds to HJ cruciform DNA, conferring on it an open structure. The RuvB hexamer acts as an ATP-dependent pump, pulling dsDNA into and through the RuvAB complex. RuvB forms 2 homohexamers on either side of HJ DNA bound by 1 or 2 RuvA tetramers; 4 subunits per hexamer contact DNA at a time. Coordinated motions by a converter formed by DNA-disengaged RuvB subunits stimulates ATP hydrolysis and nucleotide exchange. Immobilization of the converter enables RuvB to convert the ATP-contained energy into a lever motion, pulling 2 nucleotides of DNA out of the RuvA tetramer per ATP hydrolyzed, thus driving DNA branch migration. The RuvB motors rotate together with the DNA substrate, which together with the progressing nucleotide cycle form the mechanistic basis for DNA recombination by continuous HJ branch migration. Branch migration allows RuvC to scan DNA until it finds its consensus sequence, where it cleaves and resolves cruciform DNA. The chain is Holliday junction branch migration complex subunit RuvB from Nostoc sp. (strain PCC 7120 / SAG 25.82 / UTEX 2576).